Here is a 612-residue protein sequence, read N- to C-terminus: Kelch repeat and BTB domain-containing protein 3 (612 aa).

The BTB domain occupies 52–119; sequence YDFKIIMKDE…AYTGKTKITD (68 aa). The BACK domain occupies 154 to 254; that stretch reads CLQLLSISDS…QLSEETLQDC (101 aa). Kelch repeat units follow at residues 295–341, 343–403, 404–454, 456–506, and 552–599; these read KYIF…SSYG, KIFL…MALD, RLFV…TCQN, IYVL…KAVP, and KIYI…VIQF.

This chain is Kelch repeat and BTB domain-containing protein 3, found in Homo sapiens (Human).